The following is a 631-amino-acid chain: Nucleoside triphosphatase I (631 aa).

In terms of domain architecture, Helicase ATP-binding spans 42 to 204; that stretch reads FLGLDSMHSL…TMLVNLLRPG (163 aa). Position 55 to 62 (55 to 62) interacts with ATP; the sequence is HETGVGKT. The DEXH box signature appears at 141–144; sequence DECH. Residues 367-532 form the Helicase C-terminal domain; that stretch reads KFIDVCLGIL…EFVQLFRVFK (166 aa). Residues 457-524 form a binding to the cap-specific mRNA (nucleoside-2'-O-)-methyltransferase region; it reads DIFILDMTWN…EIIQSKSKEF (68 aa).

This sequence belongs to the helicase family. NPH I subfamily. As to quaternary structure, monomer. Interacts (via C-terminus) with RAP94/OPG109 (via N-terminus). Interacts with the cap-specific mRNA (nucleoside-2'-O-)-methyltransferase OPG102.

Its subcellular location is the virion. It catalyses the reaction a ribonucleoside 5'-triphosphate + H2O = a ribonucleoside 5'-diphosphate + phosphate + H(+). In terms of biological role, DNA-dependent ATPase that acts as a 5' to 3' translocase on single-stranded DNA and thereby plays a role in transcription termination of viral early genes. Uses forward translocation in concert with the viral RNA polymerase RAP94/OPG109 subunit and the capping enzyme/VTF to catalyze release of UUUUUNU-containing nascent RNA from the elongation complex. In addition, acts as a positive elongation factor to assist transcription through problematic sequences. The sequence is that of Nucleoside triphosphatase I (OPG123) from Variola virus (isolate Human/India/Ind3/1967) (VARV).